Consider the following 595-residue polypeptide: ATPase family AAA domain-containing protein 3 (595 aa).

Positions 1 to 48 (MSWLFGVQKNATPQIPDDFQAGAAPGGPQQPGQGQRQEGNSKMAYSFD) are disordered. The Mitochondrial intermembrane portion of the chain corresponds to 1–243 (MSWLFGVQKN…LNQFLNDKTK (243 aa)). Low complexity predominate over residues 20–35 (QAGAAPGGPQQPGQGQ). 2 coiled-coil regions span residues 80-107 (VTRQKEVENETKKIEAQLANMKSEHIRV) and 140-175 (EELAMKARMQEESLRKQEESVKKQEQLRKQTIEHEL). The chain crosses the membrane as a helical span at residues 244–260 (IAAAVGGLTALAVGWYT). Over 261-595 (AKRGTGVTAR…GTTLKRETAV (335 aa)) the chain is Mitochondrial matrix. Residue 349 to 356 (GPPGTGKT) coordinates ATP. The PDZ-binding signature appears at 592-595 (ETAV).

Belongs to the AAA ATPase family.

It is found in the mitochondrion inner membrane. Its subcellular location is the mitochondrion matrix. The protein localises to the mitochondrion nucleoid. Functionally, essential for mitochondrial network organization, mitochondrial metabolism and cell growth at organism and cellular level. Important during development for the up-regulation of mitochondrial activity during the transition to higher larval stages. Regulates mitochondrial iron homeostasis. May play an important role in mitochondrial protein synthesis. May also participate in mitochondrial DNA replication. May bind to mitochondrial DNA D-loops and contribute to nucleoid stability. Plays a role in regulating the production of reactive oxygen species in response to heat stress. The polypeptide is ATPase family AAA domain-containing protein 3 (Caenorhabditis elegans).